Reading from the N-terminus, the 486-residue chain is Pentatricopeptide repeat-containing protein At2g01860 (486 aa).

Residues 111–137 (QKPDKPSRVRPLPLPQPHKLRPLGLPT) are disordered. 5 PPR repeats span residues 290 to 321 (DSSVYVKMILEIAKNPDKYHLVVALLEELKKR), 327 to 361 (SQQDCTSIMKICVKLGEFELVESLFDWFKASNREP), 362 to 396 (SVVMYTTMIHSRYSEQKYREAMSVVWEMEESNCLL), 397 to 431 (DLPAYRVVIKLFVALDDLGRAMRYYSKLKEAGFSP), and 432 to 466 (TYDIYRDMISVYTASGRLTKCKEICKEVEDAGLRL).

This sequence belongs to the PPR family. P subfamily.

This Arabidopsis thaliana (Mouse-ear cress) protein is Pentatricopeptide repeat-containing protein At2g01860 (EMB975).